We begin with the raw amino-acid sequence, 244 residues long: ATP synthase subunit a (244 aa).

5 helical membrane passes run 17–37 (LTNILMITVASVIVLLIAILT), 75–95 (FLALGVTLLMYIFVSNMLGLP), 112–132 (DPAITLTLAVMVVALTHYYGV), 170–190 (LYGNIFAGEILLGLLAGLATS), and 221–241 (GAIQAFIFTMLTMVYMSHKIS).

The protein belongs to the ATPase A chain family. As to quaternary structure, F-type ATPases have 2 components, CF(1) - the catalytic core - and CF(0) - the membrane proton channel. CF(1) has five subunits: alpha(3), beta(3), gamma(1), delta(1), epsilon(1). CF(0) has three main subunits: a(1), b(2) and c(9-12). The alpha and beta chains form an alternating ring which encloses part of the gamma chain. CF(1) is attached to CF(0) by a central stalk formed by the gamma and epsilon chains, while a peripheral stalk is formed by the delta and b chains. The F(1)F(0) complex interacts with SpoIIIJ and YqjG; YqgA is found in the same complex.

The protein resides in the cell membrane. Functionally, key component of the proton channel; it plays a direct role in the translocation of protons across the membrane. The protein is ATP synthase subunit a of Bacillus subtilis (strain 168).